Reading from the N-terminus, the 738-residue chain is Junction plakoglobin (738 aa).

ARM repeat units follow at residues 128–167 (NYQD…QLSK), 168–211 (KEAS…LSHH), 212–251 (REGL…NLLL), 254–293 (EGAK…LLAY), 294–337 (GNQE…LSVC), 338–377 (PSNK…NLSD), 379–416 (ATKQ…NLTC), 419–460 (GRNK…HLTS), 466–506 (EVAQ…NLAL), 508–547 (PANH…QPYT), 570–609 (PVNR…ELAQ), and 611–657 (KEAA…ADYR).

It belongs to the beta-catenin family. In terms of assembly, homodimer.

The protein resides in the cell junction. The protein localises to the adherens junction. Its subcellular location is the desmosome. It is found in the cytoplasm. It localises to the cytoskeleton. The protein resides in the membrane. In terms of biological role, common junctional plaque protein. The membrane-associated plaques are architectural elements in an important strategic position to influence the arrangement and function of both the cytoskeleton and the cells within the tissue. The presence of plakoglobin in both the desmosomes and in the intermediate junctions suggests that it plays a central role in the structure and function of submembranous plaques. The polypeptide is Junction plakoglobin (jup) (Xenopus laevis (African clawed frog)).